A 314-amino-acid chain; its full sequence is Cytochrome f (314 aa).

The N-terminal stretch at 1–29 (MTRSISISVLIISVLIMIYVITRTSISNA) is a signal peptide. Residues Tyr30, Cys50, Cys53, and His54 each contribute to the heme site. The helical transmembrane segment at 280-300 (VQGLLFFLASVILAQIFLVLK) threads the bilayer.

The protein belongs to the cytochrome f family. As to quaternary structure, the 4 large subunits of the cytochrome b6-f complex are cytochrome b6, subunit IV (17 kDa polypeptide, petD), cytochrome f and the Rieske protein, while the 4 small subunits are PetG, PetL, PetM and PetN. The complex functions as a dimer. Requires heme as cofactor.

It localises to the plastid. The protein resides in the chloroplast thylakoid membrane. In terms of biological role, component of the cytochrome b6-f complex, which mediates electron transfer between photosystem II (PSII) and photosystem I (PSI), cyclic electron flow around PSI, and state transitions. This Illicium oligandrum (Star anise) protein is Cytochrome f.